The chain runs to 199 residues: V-type ATP synthase subunit E (199 aa).

The protein belongs to the V-ATPase E subunit family.

Functionally, produces ATP from ADP in the presence of a proton gradient across the membrane. The sequence is that of V-type ATP synthase subunit E from Clostridium botulinum (strain Hall / ATCC 3502 / NCTC 13319 / Type A).